We begin with the raw amino-acid sequence, 591 residues long: L-fucose isomerase (591 aa).

Active-site proton acceptor residues include glutamate 338 and aspartate 362. Mn(2+) contacts are provided by glutamate 338, aspartate 362, and histidine 529.

It belongs to the L-fucose isomerase family. The cofactor is Mn(2+).

It is found in the cytoplasm. It carries out the reaction L-fucose = L-fuculose. Its pathway is carbohydrate degradation; L-fucose degradation; L-lactaldehyde and glycerone phosphate from L-fucose: step 1/3. Functionally, converts the aldose L-fucose into the corresponding ketose L-fuculose. This Phocaeicola vulgatus (strain ATCC 8482 / DSM 1447 / JCM 5826 / CCUG 4940 / NBRC 14291 / NCTC 11154) (Bacteroides vulgatus) protein is L-fucose isomerase.